Consider the following 212-residue polypeptide: Thiamine-phosphate synthase (212 aa).

Residues 40–44 (QFREK) and asparagine 75 each bind 4-amino-2-methyl-5-(diphosphooxymethyl)pyrimidine. Residues aspartate 76 and aspartate 95 each contribute to the Mg(2+) site. Residue serine 113 participates in 4-amino-2-methyl-5-(diphosphooxymethyl)pyrimidine binding. 2-[(2R,5Z)-2-carboxy-4-methylthiazol-5(2H)-ylidene]ethyl phosphate is bound at residue 139-141 (TIS). Lysine 142 contacts 4-amino-2-methyl-5-(diphosphooxymethyl)pyrimidine. 2-[(2R,5Z)-2-carboxy-4-methylthiazol-5(2H)-ylidene]ethyl phosphate-binding positions include glycine 171 and 191 to 192 (IS).

It belongs to the thiamine-phosphate synthase family. Mg(2+) serves as cofactor.

It catalyses the reaction 2-[(2R,5Z)-2-carboxy-4-methylthiazol-5(2H)-ylidene]ethyl phosphate + 4-amino-2-methyl-5-(diphosphooxymethyl)pyrimidine + 2 H(+) = thiamine phosphate + CO2 + diphosphate. The enzyme catalyses 2-(2-carboxy-4-methylthiazol-5-yl)ethyl phosphate + 4-amino-2-methyl-5-(diphosphooxymethyl)pyrimidine + 2 H(+) = thiamine phosphate + CO2 + diphosphate. The catalysed reaction is 4-methyl-5-(2-phosphooxyethyl)-thiazole + 4-amino-2-methyl-5-(diphosphooxymethyl)pyrimidine + H(+) = thiamine phosphate + diphosphate. Its pathway is cofactor biosynthesis; thiamine diphosphate biosynthesis; thiamine phosphate from 4-amino-2-methyl-5-diphosphomethylpyrimidine and 4-methyl-5-(2-phosphoethyl)-thiazole: step 1/1. Functionally, condenses 4-methyl-5-(beta-hydroxyethyl)thiazole monophosphate (THZ-P) and 2-methyl-4-amino-5-hydroxymethyl pyrimidine pyrophosphate (HMP-PP) to form thiamine monophosphate (TMP). This chain is Thiamine-phosphate synthase, found in Staphylococcus haemolyticus (strain JCSC1435).